The primary structure comprises 108 residues: Nucleoid-associated protein CHAB381_0200 (108 aa).

Belongs to the YbaB/EbfC family. In terms of assembly, homodimer.

Its subcellular location is the cytoplasm. The protein resides in the nucleoid. Binds to DNA and alters its conformation. May be involved in regulation of gene expression, nucleoid organization and DNA protection. The polypeptide is Nucleoid-associated protein CHAB381_0200 (Campylobacter hominis (strain ATCC BAA-381 / DSM 21671 / CCUG 45161 / LMG 19568 / NCTC 13146 / CH001A)).